Consider the following 487-residue polypeptide: Protein NEN2 (487 aa).

An Exonuclease domain is found at 18–179 (FFDVETTIPF…LDDVRMNFEV (162 aa)). Residues Asp-20 and Glu-22 each contribute to the Mg(2+) site. Residue His-167 is the Proton donor/acceptor of the active site. Mg(2+) is bound at residue Asp-172. Disordered stretches follow at residues 200-233 (NSVTTTTPETSSRRRRTIKKSPLQSPTDQQTGEN) and 269-291 (SDVPMEEEQNQQSETVASEGTGD). A compositionally biased stretch (polar residues) spans 221 to 233 (PLQSPTDQQTGEN).

Mg(2+) is required as a cofactor. As to expression, expressed in the sieve elements and phloem pole pericycle cells.

The protein localises to the cytoplasm. The protein resides in the nucleus. Probable exonuclease involved in enuclation of sieve elements. In Arabidopsis thaliana (Mouse-ear cress), this protein is Protein NEN2.